Consider the following 461-residue polypeptide: Complement C1r subcomponent-like protein (461 aa).

An N-terminal signal peptide occupies residues 1 to 22 (MCWLLLWGILHTCPTQASVLLA). Residues 23 to 139 (QQFPQQLTSP…KGFLALYQAA (117 aa)) enclose the CUB domain. 2 cysteine pairs are disulfide-bonded: Cys71–Cys89 and Cys164–Cys197. The 62-residue stretch at 138-199 (AAVSQPNGDA…RGEEVPECVP (62 aa)) folds into the Sushi domain. The Peptidase S1 domain occupies 214 to 453 (TFGSSRAKPG…YVDWIKGVIE (240 aa)). The active-site Charge relay system is His252. Asn265 carries N-linked (GlcNAc...) asparagine glycosylation. Asp308 functions as the Charge relay system in the catalytic mechanism. N-linked (GlcNAc...) asparagine glycosylation occurs at Asn332. Disulfide bonds link Cys371–Cys390 and Cys401–Cys431. Catalysis depends on Ser405, which acts as the Charge relay system.

Belongs to the peptidase S1 family.

It is found in the secreted. Functionally, mediates the proteolytic cleavage of HP/haptoglobin in the endoplasmic reticulum. The polypeptide is Complement C1r subcomponent-like protein (C1rl) (Rattus norvegicus (Rat)).